We begin with the raw amino-acid sequence, 256 residues long: MDAKYKVVDVDTFARQLITDKCSELIETENLLPANILHVVKQARDKYFEDPSVKNYEYVKNLFLRTKYMDDSIDYKNFNRRVLLIVFKFALNRGSGYFPSYRELIEVAVKRLNKINPDLKSSPRAMLQHYNECLENLDNPVTDEHHLLTFGKEVATKMFIEAFEFSYASNNEINLTTNKRGSDLFDPIPMPAPAPAPSASLLDNVMNERKRKLQASVTTTPPKRCKLADRPAQTTQDTPRAPQPAPVRAQRPLFTL.

Residues 211-256 (RKLQASVTTTPPKRCKLADRPAQTTQDTPRAPQPAPVRAQRPLFTL) form a disordered region. Positions 246–256 (PVRAQRPLFTL) are enriched in low complexity.

This is an uncharacterized protein from Orgyia pseudotsugata (Douglas-fir tussock moth).